Consider the following 267-residue polypeptide: MADRRNLFFFYGDDKATLVEKMKPIYRILEENGFTILDHPKNANAIVSVGDDATFLQAVRKTGFREDCLYAGISTKDEISFYCDFHIDHVDTALQEITKNEIEVRKYPTIQVDVDGSTSFHCLNEFSLRSSIIKTFVVDVHVDDLYFETFRGDGLVVSTPTGSTAYNKSLHGAVVDPLIPCFQVSELASLNNNTYRTLGSPFILNHERTLTLKLRPDGNDYPVIGMDNEALSIKQVEKAVVRLSDKQIKTVKLKNNSFWEKVQRTFL.

Asp52 (proton acceptor) is an active-site residue. NAD(+) contacts are provided by residues 52–53, 124–125, Arg151, Asp153, 164–169, and Ala188; these read DA, NE, and TAYNKS.

This sequence belongs to the NAD kinase family. It depends on a divalent metal cation as a cofactor.

The protein localises to the cytoplasm. The enzyme catalyses NAD(+) + ATP = ADP + NADP(+) + H(+). Its function is as follows. Involved in the regulation of the intracellular balance of NAD and NADP, and is a key enzyme in the biosynthesis of NADP. Catalyzes specifically the phosphorylation on 2'-hydroxyl of the adenosine moiety of NAD to yield NADP. This Bacillus cereus (strain ATCC 14579 / DSM 31 / CCUG 7414 / JCM 2152 / NBRC 15305 / NCIMB 9373 / NCTC 2599 / NRRL B-3711) protein is NAD kinase 2.